The primary structure comprises 30 residues: L-serine dehydratase, alpha chain (30 aa).

This sequence belongs to the iron-sulfur dependent L-serine dehydratase family. Heterodimer of an alpha chain and a beta chain. [4Fe-4S] cluster is required as a cofactor.

It carries out the reaction L-serine = pyruvate + NH4(+). It participates in carbohydrate biosynthesis; gluconeogenesis. This Anaerotignum propionicum (Clostridium propionicum) protein is L-serine dehydratase, alpha chain.